A 339-amino-acid polypeptide reads, in one-letter code: Ketol-acid reductoisomerase (NADP(+)) (339 aa).

The 182-residue stretch at 1 to 182 (MRVYYDRDAD…GGGRAGIIET (182 aa)) folds into the KARI N-terminal Rossmann domain. NADP(+)-binding positions include 24-27 (YGSQ), R48, S51, S53, and 83-86 (DELQ). H108 is a catalytic residue. Residue G134 participates in NADP(+) binding. One can recognise a KARI C-terminal knotted domain in the interval 183–328 (TFREECETDL…AKLRDMMPWI (146 aa)). Residues D191, E195, E227, and E231 each contribute to the Mg(2+) site. S252 provides a ligand contact to substrate.

The protein belongs to the ketol-acid reductoisomerase family. Mg(2+) serves as cofactor.

The enzyme catalyses (2R)-2,3-dihydroxy-3-methylbutanoate + NADP(+) = (2S)-2-acetolactate + NADPH + H(+). It catalyses the reaction (2R,3R)-2,3-dihydroxy-3-methylpentanoate + NADP(+) = (S)-2-ethyl-2-hydroxy-3-oxobutanoate + NADPH + H(+). It functions in the pathway amino-acid biosynthesis; L-isoleucine biosynthesis; L-isoleucine from 2-oxobutanoate: step 2/4. The protein operates within amino-acid biosynthesis; L-valine biosynthesis; L-valine from pyruvate: step 2/4. Functionally, involved in the biosynthesis of branched-chain amino acids (BCAA). Catalyzes an alkyl-migration followed by a ketol-acid reduction of (S)-2-acetolactate (S2AL) to yield (R)-2,3-dihydroxy-isovalerate. In the isomerase reaction, S2AL is rearranged via a Mg-dependent methyl migration to produce 3-hydroxy-3-methyl-2-ketobutyrate (HMKB). In the reductase reaction, this 2-ketoacid undergoes a metal-dependent reduction by NADPH to yield (R)-2,3-dihydroxy-isovalerate. The polypeptide is Ketol-acid reductoisomerase (NADP(+)) (Rhodopseudomonas palustris (strain ATCC BAA-98 / CGA009)).